The following is a 644-amino-acid chain: Translation factor GUF1, mitochondrial (644 aa).

The N-terminal 14 residues, 1–14, are a transit peptide targeting the mitochondrion; it reads MLRKAFRYLVPVRC. The tr-type G domain maps to 46 to 227; it reads ERYRNFSIVA…AIVDRIPPPT (182 aa). Residues 55–62, 120–124, and 174–177 contribute to the GTP site; these read AHVDHGKS, DTPGH, and NKID.

It belongs to the TRAFAC class translation factor GTPase superfamily. Classic translation factor GTPase family. LepA subfamily.

Its subcellular location is the mitochondrion inner membrane. The enzyme catalyses GTP + H2O = GDP + phosphate + H(+). In terms of biological role, promotes mitochondrial protein synthesis. May act as a fidelity factor of the translation reaction, by catalyzing a one-codon backward translocation of tRNAs on improperly translocated ribosomes. Binds to mitochondrial ribosomes in a GTP-dependent manner. The chain is Translation factor GUF1, mitochondrial from Eremothecium gossypii (strain ATCC 10895 / CBS 109.51 / FGSC 9923 / NRRL Y-1056) (Yeast).